The following is a 378-amino-acid chain: UPF0754 membrane protein BT9727_0767 (378 aa).

2 consecutive transmembrane segments (helical) span residues 1-21 (MNIWLSMLTTTGLGAIIGGFT) and 357-377 (YLGALLGGMIGIVQGLLLLFL).

This sequence belongs to the UPF0754 family.

Its subcellular location is the cell membrane. The sequence is that of UPF0754 membrane protein BT9727_0767 from Bacillus thuringiensis subsp. konkukian (strain 97-27).